The sequence spans 175 residues: Protein FMP23, mitochondrial (175 aa).

Residues 1 to 38 (MLINHLSKIRTVRHFSNIKPVLSKEVSRRVIVAPASHF) constitute a mitochondrion transit peptide.

It localises to the mitochondrion. In terms of biological role, may be involved in mitochondrial iron or copper homeostatis. This is Protein FMP23, mitochondrial (FMP23) from Saccharomyces cerevisiae (strain ATCC 204508 / S288c) (Baker's yeast).